We begin with the raw amino-acid sequence, 228 residues long: UPF0758 protein RALTA_A2508 (228 aa).

The MPN domain maps to 102-224 (GFDSPDSVRS…IRSLAESCER (123 aa)). Zn(2+) contacts are provided by H173, H175, and D186. Residues 173–186 (HNHPRGTTAPSQSD) carry the JAMM motif motif.

The protein belongs to the UPF0758 family.

The polypeptide is UPF0758 protein RALTA_A2508 (Cupriavidus taiwanensis (strain DSM 17343 / BCRC 17206 / CCUG 44338 / CIP 107171 / LMG 19424 / R1) (Ralstonia taiwanensis (strain LMG 19424))).